The following is a 205-amino-acid chain: uncharacterized protein (205 aa).

The next 5 membrane-spanning stretches (helical) occupy residues 5-25, 41-61, 68-88, 117-137, and 147-167; these read VWLA…SGTV, GAII…GIGI, SALA…WLGI, LINL…PQFI, and FLVL…GYTA.

It belongs to the Rht family.

It is found in the cell inner membrane. Involved in positive regulation of motility and negative regulation of biofilm formation. This is an uncharacterized protein from Vibrio cholerae serotype O1 (strain ATCC 39315 / El Tor Inaba N16961).